Reading from the N-terminus, the 438-residue chain is UDP-N-acetylmuramoylalanine--D-glutamate ligase (438 aa).

Gly-112–Thr-118 is an ATP binding site.

This sequence belongs to the MurCDEF family.

The protein localises to the cytoplasm. The enzyme catalyses UDP-N-acetyl-alpha-D-muramoyl-L-alanine + D-glutamate + ATP = UDP-N-acetyl-alpha-D-muramoyl-L-alanyl-D-glutamate + ADP + phosphate + H(+). It participates in cell wall biogenesis; peptidoglycan biosynthesis. Functionally, cell wall formation. Catalyzes the addition of glutamate to the nucleotide precursor UDP-N-acetylmuramoyl-L-alanine (UMA). This Salmonella typhi protein is UDP-N-acetylmuramoylalanine--D-glutamate ligase.